The primary structure comprises 370 residues: Dual-specificity RNA methyltransferase RlmN (370 aa).

The Proton acceptor role is filled by Glu-93. Residues 99-337 (EEGRGTLCVS…VTTVRKTRGD (239 aa)) enclose the Radical SAM core domain. Cysteines 106 and 343 form a disulfide. Cys-113, Cys-117, and Cys-120 together coordinate [4Fe-4S] cluster. S-adenosyl-L-methionine contacts are provided by residues 167-168 (GE), Ser-199, 221-223 (SLH), and Asn-300. Residue Cys-343 is the S-methylcysteine intermediate of the active site.

It belongs to the radical SAM superfamily. RlmN family. [4Fe-4S] cluster serves as cofactor.

The protein resides in the cytoplasm. It carries out the reaction adenosine(2503) in 23S rRNA + 2 reduced [2Fe-2S]-[ferredoxin] + 2 S-adenosyl-L-methionine = 2-methyladenosine(2503) in 23S rRNA + 5'-deoxyadenosine + L-methionine + 2 oxidized [2Fe-2S]-[ferredoxin] + S-adenosyl-L-homocysteine. It catalyses the reaction adenosine(37) in tRNA + 2 reduced [2Fe-2S]-[ferredoxin] + 2 S-adenosyl-L-methionine = 2-methyladenosine(37) in tRNA + 5'-deoxyadenosine + L-methionine + 2 oxidized [2Fe-2S]-[ferredoxin] + S-adenosyl-L-homocysteine. In terms of biological role, specifically methylates position 2 of adenine 2503 in 23S rRNA and position 2 of adenine 37 in tRNAs. m2A2503 modification seems to play a crucial role in the proofreading step occurring at the peptidyl transferase center and thus would serve to optimize ribosomal fidelity. The chain is Dual-specificity RNA methyltransferase RlmN from Francisella tularensis subsp. mediasiatica (strain FSC147).